The chain runs to 289 residues: Pantothenate synthetase (289 aa).

30 to 37 (MGYLHEGH) is an ATP binding site. Catalysis depends on His-37, which acts as the Proton donor. Residue Gln-61 participates in (R)-pantoate binding. A beta-alanine-binding site is contributed by Gln-61. 147-150 (GLKD) contributes to the ATP binding site. Gln-153 contacts (R)-pantoate. ATP contacts are provided by residues Val-176 and 184–187 (KSSR).

The protein belongs to the pantothenate synthetase family. As to quaternary structure, homodimer.

Its subcellular location is the cytoplasm. It catalyses the reaction (R)-pantoate + beta-alanine + ATP = (R)-pantothenate + AMP + diphosphate + H(+). Its pathway is cofactor biosynthesis; (R)-pantothenate biosynthesis; (R)-pantothenate from (R)-pantoate and beta-alanine: step 1/1. Its function is as follows. Catalyzes the condensation of pantoate with beta-alanine in an ATP-dependent reaction via a pantoyl-adenylate intermediate. In Geobacillus thermodenitrificans (strain NG80-2), this protein is Pantothenate synthetase.